Consider the following 471-residue polypeptide: 6-phosphofructo-2-kinase/fructose-2,6-bisphosphatase 1 (471 aa).

Position 2 is an N-acetylserine (Ser2). Residues 2–250 (SREMGELTQT…AYYLMNIHVT (249 aa)) form a 6-phosphofructo-2-kinase region. At Ser33 the chain carries Phosphoserine; by PKA. 49–57 (GLPARGKTY) contributes to the ATP binding site. 2 residues coordinate beta-D-fructose 6-phosphate: Arg82 and Arg105. Asp131 is an active-site residue. Beta-D-fructose 6-phosphate is bound by residues Thr133 and Arg139. Ser141 carries the post-translational modification Phosphoserine. Cys161 is a catalytic residue. 170–175 (NIKQVK) lines the ATP pocket. Lys175, Arg196, and Tyr200 together coordinate beta-D-fructose 6-phosphate. Residues 251-471 (PRSIYLCRHG…EALDTVPAHY (221 aa)) are fructose-2,6-bisphosphatase. Arg258 is a beta-D-fructose 2,6-bisphosphate binding site. Residue His259 is the Tele-phosphohistidine intermediate of the active site. Beta-D-fructose 2,6-bisphosphate-binding residues include Asn265, Gly271, and Arg308. The active-site Proton donor/acceptor is the Glu328. Tyr339, Arg353, Lys357, Tyr368, Gln394, and Arg398 together coordinate beta-D-fructose 2,6-bisphosphate. Residue 350 to 353 (FALR) participates in ATP binding. Residues 394-398 (QAVMR) and Tyr430 contribute to the ATP site.

It in the C-terminal section; belongs to the phosphoglycerate mutase family. Homodimer. As to expression, liver.

The enzyme catalyses beta-D-fructose 2,6-bisphosphate + H2O = beta-D-fructose 6-phosphate + phosphate. It catalyses the reaction beta-D-fructose 6-phosphate + ATP = beta-D-fructose 2,6-bisphosphate + ADP + H(+). Phosphorylation at Ser-33 inhibits the kinase and activates the bisphosphatase. Its function is as follows. Synthesis and degradation of fructose 2,6-bisphosphate. The sequence is that of 6-phosphofructo-2-kinase/fructose-2,6-bisphosphatase 1 from Mus musculus (Mouse).